Reading from the N-terminus, the 234-residue chain is ATP synthase subunit a 1 (234 aa).

5 helical membrane passes run 20-40, 76-96, 105-125, 162-184, and 195-215; these read ETVV…ILLT, LLPL…LGVI, DLSV…AYGV, LFGN…GFLA, and EALV…AGAM.

It belongs to the ATPase A chain family. In terms of assembly, F-type ATPases have 2 components, CF(1) - the catalytic core - and CF(0) - the membrane proton channel. CF(1) has five subunits: alpha(3), beta(3), gamma(1), delta(1), epsilon(1). CF(0) has three main subunits: a(1), b(2) and c(9-12). The alpha and beta chains form an alternating ring which encloses part of the gamma chain. CF(1) is attached to CF(0) by a central stalk formed by the gamma and epsilon chains, while a peripheral stalk is formed by the delta and b chains.

The protein localises to the cell inner membrane. Functionally, key component of the proton channel; it plays a direct role in the translocation of protons across the membrane. The sequence is that of ATP synthase subunit a 1 from Hahella chejuensis (strain KCTC 2396).